We begin with the raw amino-acid sequence, 461 residues long: Glycine--tRNA ligase (461 aa).

The substrate site is built by R100 and E163. Residues R195–E197, F205–F210, E282–L283, and G326–R329 each bind ATP. F210–E214 is a binding site for substrate. A substrate-binding site is contributed by E322–G326.

Belongs to the class-II aminoacyl-tRNA synthetase family. In terms of assembly, homodimer.

It is found in the cytoplasm. The catalysed reaction is tRNA(Gly) + glycine + ATP = glycyl-tRNA(Gly) + AMP + diphosphate. Functionally, catalyzes the attachment of glycine to tRNA(Gly). The chain is Glycine--tRNA ligase from Corynebacterium efficiens (strain DSM 44549 / YS-314 / AJ 12310 / JCM 11189 / NBRC 100395).